The chain runs to 200 residues: Recombination protein RecR (200 aa).

Residues 60-75 (CVYCQALTEDDVCNIC) form a C4-type zinc finger. In terms of domain architecture, Toprim spans 83–177 (TKLCIIESML…KISRIGFGVP (95 aa)).

The protein belongs to the RecR family.

May play a role in DNA repair. It seems to be involved in an RecBC-independent recombinational process of DNA repair. It may act with RecF and RecO. The protein is Recombination protein RecR of Francisella tularensis subsp. mediasiatica (strain FSC147).